The primary structure comprises 80 residues: Putative membrane protein insertion efficiency factor (80 aa).

This sequence belongs to the UPF0161 family.

Its subcellular location is the cell membrane. Functionally, could be involved in insertion of integral membrane proteins into the membrane. This Limosilactobacillus fermentum (strain NBRC 3956 / LMG 18251) (Lactobacillus fermentum) protein is Putative membrane protein insertion efficiency factor.